The sequence spans 210 residues: Putative polysaccharide-binding protein (210 aa).

Positions 1-22 (MGFLKGTAAALTLLSAAAAASA) are cleaved as a signal peptide. 4 CBM1 domains span residues 23 to 62 (CGVLYEQCGGIGFDGVTCCSEGLMCMKMGPYYSQCRAMPG), 63 to 105 (MMGQ…LANK), 125 to 165 (CGKE…APPP), and 166 to 210 (KMGE…PMHP).

The chain is Putative polysaccharide-binding protein from Porphyra purpurea (Red seaweed).